Here is a 413-residue protein sequence, read N- to C-terminus: Probable tRNA pseudouridine synthase D (413 aa).

Catalysis depends on Asp-97, which acts as the Nucleophile. Residues 167 to 370 form the TRUD domain; it reads AVPNYYGYQR…YGSYRRARLE (204 aa).

Belongs to the pseudouridine synthase TruD family.

It carries out the reaction uridine(13) in tRNA = pseudouridine(13) in tRNA. In terms of biological role, could be responsible for synthesis of pseudouridine from uracil-13 in transfer RNAs. This chain is Probable tRNA pseudouridine synthase D, found in Pyrobaculum arsenaticum (strain DSM 13514 / JCM 11321 / PZ6).